The following is a 720-amino-acid chain: Polyribonucleotide nucleotidyltransferase (720 aa).

Mg(2+) is bound by residues aspartate 486 and aspartate 492. The KH domain occupies proline 553–isoleucine 612. An S1 motif domain is found at glycine 622–arginine 690. Residues glutamate 698–glutamate 720 form a disordered region.

Belongs to the polyribonucleotide nucleotidyltransferase family. Mg(2+) is required as a cofactor.

The protein resides in the cytoplasm. The enzyme catalyses RNA(n+1) + phosphate = RNA(n) + a ribonucleoside 5'-diphosphate. In terms of biological role, involved in mRNA degradation. Catalyzes the phosphorolysis of single-stranded polyribonucleotides processively in the 3'- to 5'-direction. The polypeptide is Polyribonucleotide nucleotidyltransferase (Granulibacter bethesdensis (strain ATCC BAA-1260 / CGDNIH1)).